The chain runs to 299 residues: dTDP-4-dehydrorhamnose reductase (299 aa).

Residues 10 to 12 (GQV), Asp30, 39 to 40 (DF), and 63 to 65 (AHT) contribute to the NADH site. 11 to 12 (QV) contacts NADPH. NADPH contacts are provided by residues 39–40 (DF), 63–65 (AHT), and Tyr102. DTDP-beta-L-rhamnose is bound at residue 104 to 105 (TD). Residues Tyr128 and Lys132 each coordinate NADH. NADPH-binding residues include Tyr128 and Lys132. The Proton donor/acceptor role is filled by Tyr128. Trp153 serves as a coordination point for dTDP-beta-L-rhamnose.

Belongs to the dTDP-4-dehydrorhamnose reductase family. In terms of assembly, homodimer. Mg(2+) is required as a cofactor.

The catalysed reaction is dTDP-beta-L-rhamnose + NADP(+) = dTDP-4-dehydro-beta-L-rhamnose + NADPH + H(+). It functions in the pathway carbohydrate biosynthesis; dTDP-L-rhamnose biosynthesis. The protein operates within bacterial outer membrane biogenesis; LPS O-antigen biosynthesis. In terms of biological role, involved in the biosynthesis of the dTDP-L-rhamnose which is an important component of lipopolysaccharide (LPS). Catalyzes the reduction of dTDP-6-deoxy-L-lyxo-4-hexulose to yield dTDP-L-rhamnose. RmlD uses NADH and NADPH nearly equally well. The protein is dTDP-4-dehydrorhamnose reductase of Shigella flexneri.